The chain runs to 336 residues: Heat-inducible transcription repressor HrcA (336 aa).

This sequence belongs to the HrcA family.

Functionally, negative regulator of class I heat shock genes (grpE-dnaK-dnaJ and groELS operons). Prevents heat-shock induction of these operons. This chain is Heat-inducible transcription repressor HrcA, found in Variovorax paradoxus (strain S110).